The chain runs to 396 residues: Phosphoglycerate kinase (396 aa).

Residues 21-23 (DLN), R36, 59-62 (HFDR), R118, and R151 contribute to the substrate site. ATP contacts are provided by residues K201, E323, and 353–356 (GGDT).

Belongs to the phosphoglycerate kinase family. Monomer.

The protein resides in the cytoplasm. It catalyses the reaction (2R)-3-phosphoglycerate + ATP = (2R)-3-phospho-glyceroyl phosphate + ADP. Its pathway is carbohydrate degradation; glycolysis; pyruvate from D-glyceraldehyde 3-phosphate: step 2/5. The sequence is that of Phosphoglycerate kinase from Granulibacter bethesdensis (strain ATCC BAA-1260 / CGDNIH1).